The sequence spans 258 residues: Aspartate/glutamate leucyltransferase (258 aa).

It belongs to the R-transferase family. Bpt subfamily.

The protein resides in the cytoplasm. It catalyses the reaction N-terminal L-glutamyl-[protein] + L-leucyl-tRNA(Leu) = N-terminal L-leucyl-L-glutamyl-[protein] + tRNA(Leu) + H(+). The enzyme catalyses N-terminal L-aspartyl-[protein] + L-leucyl-tRNA(Leu) = N-terminal L-leucyl-L-aspartyl-[protein] + tRNA(Leu) + H(+). Its function is as follows. Functions in the N-end rule pathway of protein degradation where it conjugates Leu from its aminoacyl-tRNA to the N-termini of proteins containing an N-terminal aspartate or glutamate. This is Aspartate/glutamate leucyltransferase from Rhodopseudomonas palustris (strain BisA53).